The chain runs to 399 residues: Cytohesin-3 (399 aa).

Residues Glu14–Ser61 adopt a coiled-coil conformation. The 130-residue stretch at Phe77 to Asn206 folds into the SEC7 domain. In terms of domain architecture, PH spans Asn264–Ser380. Residues Lys273–Thr280, Arg284, Tyr295, Arg305, and Asn354 each bind a 1,2-diacyl-sn-glycero-3-phospho-(1D-myo-inositol-3,4,5-trisphosphate). The tract at residues Arg391 to Lys399 is C-terminal autoinhibitory region.

In terms of assembly, interacts with TAMALIN. Interacts with FRMD4A. Interacts with FRMD4B.

The protein localises to the cytoplasm. The protein resides in the cytosol. It localises to the cell membrane. Its subcellular location is the cell junction. It is found in the adherens junction. The protein localises to the tight junction. Functionally, promotes guanine-nucleotide exchange on ARF1. Promotes the activation of ARF factors through replacement of GDP with GTP. Plays a role in the epithelial polarization. In Mus musculus (Mouse), this protein is Cytohesin-3 (Cyth3).